We begin with the raw amino-acid sequence, 696 residues long: Glycine--tRNA ligase beta subunit (696 aa).

This sequence belongs to the class-II aminoacyl-tRNA synthetase family. As to quaternary structure, tetramer of two alpha and two beta subunits.

The protein resides in the cytoplasm. It carries out the reaction tRNA(Gly) + glycine + ATP = glycyl-tRNA(Gly) + AMP + diphosphate. The sequence is that of Glycine--tRNA ligase beta subunit from Nitratidesulfovibrio vulgaris (strain DP4) (Desulfovibrio vulgaris).